The primary structure comprises 414 residues: Serine/threonine transporter SstT (414 aa).

8 helical membrane-spanning segments follow: residues 16-36, 46-66, 84-104, 143-163, 180-200, 219-239, 300-320, and 332-352; these read GSLV…AWVS, LGTL…LMLV, ILFL…VFSF, ALLN…GFAL, AVTF…FGLV, LVVL…LLVF, MAGA…TLGV, and VVAS…LLLI.

This sequence belongs to the dicarboxylate/amino acid:cation symporter (DAACS) (TC 2.A.23) family.

Its subcellular location is the cell inner membrane. The enzyme catalyses L-serine(in) + Na(+)(in) = L-serine(out) + Na(+)(out). It carries out the reaction L-threonine(in) + Na(+)(in) = L-threonine(out) + Na(+)(out). Functionally, involved in the import of serine and threonine into the cell, with the concomitant import of sodium (symport system). In Salmonella arizonae (strain ATCC BAA-731 / CDC346-86 / RSK2980), this protein is Serine/threonine transporter SstT.